Consider the following 326-residue polypeptide: Cyclin-dependent kinase 1 (326 aa).

One can recognise a Protein kinase domain in the interval Phe16–Phe306. ATP is bound by residues Ile22–Val30 and Lys45. Residue Asp140 is the Proton acceptor of the active site.

The protein belongs to the protein kinase superfamily. CMGC Ser/Thr protein kinase family. CDC2/CDKX subfamily. In terms of assembly, forms a stable but non-covalent complex with a regulatory subunit and with a cyclin. Interacts with cks-1.

It localises to the nucleus. It is found in the cytoplasm. Its subcellular location is the cytoskeleton. The protein localises to the microtubule organizing center. The protein resides in the centrosome. It catalyses the reaction L-seryl-[protein] + ATP = O-phospho-L-seryl-[protein] + ADP + H(+). The catalysed reaction is L-threonyl-[protein] + ATP = O-phospho-L-threonyl-[protein] + ADP + H(+). The enzyme catalyses [DNA-directed RNA polymerase] + ATP = phospho-[DNA-directed RNA polymerase] + ADP + H(+). With respect to regulation, phosphorylation both activates and inactivates the enzyme depending on the site of phosphorylation. In terms of biological role, plays a key role in the control of the eukaryotic cell cycle. Required for entry into S-phase and mitosis. Acts as a component of the kinase complex that phosphorylates the repetitive C-terminus of RNA polymerase II. May function in concert with npp-16 to arrest prophase blastomeres in response to anoxia. This Caenorhabditis briggsae protein is Cyclin-dependent kinase 1.